Consider the following 413-residue polypeptide: Autophagy-related protein 18 (413 aa).

WD repeat units follow at residues Met-1–Glu-36, Lys-69–Thr-114, Pro-141–Val-182, Ala-185–Gln-225, and Ser-230–Ser-269. The L/FRRG motif motif lies at Phe-226–Ser-230. Over residues Gln-263–Ser-289 the composition is skewed to low complexity. The disordered stretch occupies residues Gln-263–Gly-315. Basic and acidic residues predominate over residues Ser-296–His-305. 2 WD repeats span residues Lys-308 to Lys-354 and Gly-366 to Gly-406.

The protein belongs to the WD repeat PROPPIN family. As to quaternary structure, component of the PI(3,5)P2 regulatory complex.

The protein resides in the preautophagosomal structure membrane. It localises to the vacuole membrane. It is found in the endosome membrane. The PI(3,5)P2 regulatory complex regulates both the synthesis and turnover of phosphatidylinositol 3,5-bisphosphate (PtdIns(3,5)P2). Necessary for proper vacuole morphology. Plays an important role in osmotically-induced vacuole fragmentation. Required for cytoplasm to vacuole transport (Cvt) vesicle formation, pexophagy and starvation-induced autophagy. Involved in correct atg9 trafficking to the pre-autophagosomal structure. Might also be involved in premeiotic DNA replication. The polypeptide is Autophagy-related protein 18 (atg18) (Aspergillus oryzae (strain ATCC 42149 / RIB 40) (Yellow koji mold)).